The chain runs to 295 residues: Pyridoxal 5'-phosphate synthase subunit PdxS (295 aa).

Position 23 (aspartate 23) interacts with D-ribose 5-phosphate. Lysine 80 (schiff-base intermediate with D-ribose 5-phosphate) is an active-site residue. Position 152 (glycine 152) interacts with D-ribose 5-phosphate. Arginine 164 is a D-glyceraldehyde 3-phosphate binding site. D-ribose 5-phosphate is bound by residues glycine 213 and 234–235; that span reads GS.

The protein belongs to the PdxS/SNZ family. In the presence of PdxT, forms a dodecamer of heterodimers.

The catalysed reaction is aldehydo-D-ribose 5-phosphate + D-glyceraldehyde 3-phosphate + L-glutamine = pyridoxal 5'-phosphate + L-glutamate + phosphate + 3 H2O + H(+). The protein operates within cofactor biosynthesis; pyridoxal 5'-phosphate biosynthesis. Functionally, catalyzes the formation of pyridoxal 5'-phosphate from ribose 5-phosphate (RBP), glyceraldehyde 3-phosphate (G3P) and ammonia. The ammonia is provided by the PdxT subunit. Can also use ribulose 5-phosphate and dihydroxyacetone phosphate as substrates, resulting from enzyme-catalyzed isomerization of RBP and G3P, respectively. The sequence is that of Pyridoxal 5'-phosphate synthase subunit PdxS from Methanopyrus kandleri (strain AV19 / DSM 6324 / JCM 9639 / NBRC 100938).